The following is a 304-amino-acid chain: Ribosomal RNA large subunit methyltransferase F (304 aa).

Belongs to the methyltransferase superfamily. METTL16/RlmF family.

Its subcellular location is the cytoplasm. The enzyme catalyses adenosine(1618) in 23S rRNA + S-adenosyl-L-methionine = N(6)-methyladenosine(1618) in 23S rRNA + S-adenosyl-L-homocysteine + H(+). Specifically methylates the adenine in position 1618 of 23S rRNA. This is Ribosomal RNA large subunit methyltransferase F from Klebsiella pneumoniae subsp. pneumoniae (strain ATCC 700721 / MGH 78578).